Here is a 190-residue protein sequence, read N- to C-terminus: Inosine triphosphate pyrophosphatase (190 aa).

Thr-9–Lys-14 serves as a coordination point for ITP. Glu-39 serves as a coordination point for Mg(2+). ITP is bound by residues Lys-51, Asp-67 to Thr-68, Lys-84, Phe-144 to Asp-147, Lys-167, and His-172 to Arg-173.

This sequence belongs to the HAM1 NTPase family. As to quaternary structure, homodimer. Mg(2+) is required as a cofactor. Requires Mn(2+) as cofactor.

The protein resides in the cytoplasm. It carries out the reaction ITP + H2O = IMP + diphosphate + H(+). It catalyses the reaction dITP + H2O = dIMP + diphosphate + H(+). The catalysed reaction is XTP + H2O = XMP + diphosphate + H(+). Pyrophosphatase that hydrolyzes non-canonical purine nucleotides such as inosine triphosphate (ITP), deoxyinosine triphosphate (dITP) or xanthosine 5'-triphosphate (XTP) to their respective monophosphate derivatives. The enzyme does not distinguish between the deoxy- and ribose forms. Probably excludes non-canonical purines from RNA and DNA precursor pools, thus preventing their incorporation into RNA and DNA and avoiding chromosomal lesions. The polypeptide is Inosine triphosphate pyrophosphatase (Pediculus humanus subsp. corporis (Body louse)).